The sequence spans 767 residues: Polyribonucleotide nucleotidyltransferase (767 aa).

2 residues coordinate Mg(2+): D509 and D515. Positions 575–634 constitute a KH domain; the sequence is PRILTVKVPIDKIGEVIGPKGKMINSIQDETGAEITIEDDGTIYIGATDGPSAEAARDAI. One can recognise an S1 motif domain in the interval 646–718; sequence GERYLGTVVK…ERGKLSLVPV (73 aa). Residues 725 to 767 form a disordered region; the sequence is AVAAPNGGESPNGAKKTDASGNGAKQPRRRRRTRSSSRSSENT. Residues 750 to 759 are compositionally biased toward basic residues; that stretch reads QPRRRRRTRS.

Belongs to the polyribonucleotide nucleotidyltransferase family. Mg(2+) is required as a cofactor.

The protein resides in the cytoplasm. It carries out the reaction RNA(n+1) + phosphate = RNA(n) + a ribonucleoside 5'-diphosphate. Its function is as follows. Involved in mRNA degradation. Catalyzes the phosphorolysis of single-stranded polyribonucleotides processively in the 3'- to 5'-direction. The sequence is that of Polyribonucleotide nucleotidyltransferase from Thermobifida fusca (strain YX).